Here is a 32-residue protein sequence, read N- to C-terminus: Calcitonin (32 aa).

The cysteines at positions 1 and 7 are disulfide-linked. The residue at position 32 (proline 32) is a Proline amide.

This sequence belongs to the calcitonin family.

It is found in the secreted. Calcitonin is a peptide hormone that causes a rapid but short-lived drop in the level of calcium and phosphate in blood by promoting the incorporation of those ions in the bones. Calcitonin function is mediated by the calcitonin receptor/CALCR and the CALCR-RAMP2 (AMYR2) receptor complex. In Sus scrofa (Pig), this protein is Calcitonin (CALCA).